The chain runs to 318 residues: Acetyl-coenzyme A carboxylase carboxyl transferase subunit alpha (318 aa).

In terms of domain architecture, CoA carboxyltransferase C-terminal spans 38–292 (KLEKRLAKLE…NKTITKSLHA (255 aa)).

This sequence belongs to the AccA family. As to quaternary structure, acetyl-CoA carboxylase is a heterohexamer composed of biotin carboxyl carrier protein (AccB), biotin carboxylase (AccC) and two subunits each of ACCase subunit alpha (AccA) and ACCase subunit beta (AccD).

The protein localises to the cytoplasm. The enzyme catalyses N(6)-carboxybiotinyl-L-lysyl-[protein] + acetyl-CoA = N(6)-biotinyl-L-lysyl-[protein] + malonyl-CoA. Its pathway is lipid metabolism; malonyl-CoA biosynthesis; malonyl-CoA from acetyl-CoA: step 1/1. Its function is as follows. Component of the acetyl coenzyme A carboxylase (ACC) complex. First, biotin carboxylase catalyzes the carboxylation of biotin on its carrier protein (BCCP) and then the CO(2) group is transferred by the carboxyltransferase to acetyl-CoA to form malonyl-CoA. The sequence is that of Acetyl-coenzyme A carboxylase carboxyl transferase subunit alpha from Listeria monocytogenes serovar 1/2a (strain ATCC BAA-679 / EGD-e).